We begin with the raw amino-acid sequence, 129 residues long: uncharacterized protein (129 aa).

2 helical membrane-spanning segments follow: residues 4–24 and 37–57; these read FKFL…ILII and VISL…DLSI.

To B.burgdorferi BBF20.

The protein localises to the cell membrane. This is an uncharacterized protein from Borreliella burgdorferi (strain ATCC 35210 / DSM 4680 / CIP 102532 / B31) (Borrelia burgdorferi).